A 445-amino-acid polypeptide reads, in one-letter code: Exodeoxyribonuclease 7 large subunit (445 aa).

This sequence belongs to the XseA family. Heterooligomer composed of large and small subunits.

It is found in the cytoplasm. It carries out the reaction Exonucleolytic cleavage in either 5'- to 3'- or 3'- to 5'-direction to yield nucleoside 5'-phosphates.. Bidirectionally degrades single-stranded DNA into large acid-insoluble oligonucleotides, which are then degraded further into small acid-soluble oligonucleotides. The sequence is that of Exodeoxyribonuclease 7 large subunit from Staphylococcus saprophyticus subsp. saprophyticus (strain ATCC 15305 / DSM 20229 / NCIMB 8711 / NCTC 7292 / S-41).